Reading from the N-terminus, the 34-residue chain is Phospholipase A2 (34 aa).

Histidine 18 is a catalytic residue. Aspartate 19 provides a ligand contact to Ca(2+).

Belongs to the phospholipase A2 family. Group I subfamily. D49 sub-subfamily. Requires Ca(2+) as cofactor. In terms of processing, contains 7 disulfide bonds. In terms of tissue distribution, expressed by the venom gland.

It is found in the secreted. The catalysed reaction is a 1,2-diacyl-sn-glycero-3-phosphocholine + H2O = a 1-acyl-sn-glycero-3-phosphocholine + a fatty acid + H(+). Snake venom phospholipase A2 (PLA2) that strongly inhibits platelet aggregation and has a strong anticoagulant activity. PLA2 catalyzes the calcium-dependent hydrolysis of the 2-acyl groups in 3-sn-phosphoglycerides. The protein is Phospholipase A2 of Pseudechis papuanus (Papuan black snake).